The chain runs to 749 residues: MAAAAVSSLLAPSGSCYSPGCHSCWGPGPGGGRRLPSPRRRPITAAARPTWAVPRRSRLEWGRVEAQNSGARTSCRAALQWLSSTARSHVNVGYGSPLVFPGLTKPGSSRCLCVVGMVGNAGNQVGDDSDDGIKVTNEKLRAVIRKSKEVLEIHRNLLEKISASERKKITSIIEDSSIYNEQDPFGQRDSSFYHLDEVPDDDEFSYDLQMYLDRRPDQSEVVATQDYEAQLSQISEMGQSVAEGTSDDPSASAAVDLINIILVAAECAPWSKTGGLGDVAGALPKALARRGHRVMVVVPMYKNYAEPQQLGEPRRYQVAGQDMEVIYYHAYIDGVDFVFIDNPIFHHVENDIYGGDRTDILKRMVLLCKAAIEVPWYVPCGGYCYGDGNLVFLANDWHTALLPVYLKAYYHDNGFMIYARSVLVIHNIAHQGRGPLDDFSYLDLPVDYMDLFKLYDPFGGDHLNIFAAGIKAADRLLTVSHGYAWELKTAEGGWGLHGIINESDWKFQGIVNGIDTTDWNPRCDIHLKSDGYTNYSLETVQAGKQQCKAALQKELGLPVRGDVPVIAFIGRLDHQKGVDLIAEAMPWIAGQDVQLIMLGTGRQDLEDTLRRLESQHYDRVRGWVGFSIRLAHRMTAGADILLMPSRFEPCGLNQLYAMMYGTVPVVHAVGGLRDTVEHYNPYEESGLGWTFEKAEANRLIDALGHCLNTYRNYRTSWEGLQKRGMMQDLSWDNAAKLYEEVLLAAKYQW.

A chloroplast-targeting transit peptide spans 1–44 (MAAAAVSSLLAPSGSCYSPGCHSCWGPGPGGGRRLPSPRRRPIT). Position 272 (Lys272) interacts with ADP-alpha-D-glucose.

Belongs to the glycosyltransferase 1 family. Bacterial/plant glycogen synthase subfamily. In terms of tissue distribution, expressed in endosperm, leaves, and weakly in roots.

It is found in the plastid. It localises to the amyloplast. The protein localises to the chloroplast. The catalysed reaction is [(1-&gt;4)-alpha-D-glucosyl](n) + ADP-alpha-D-glucose = [(1-&gt;4)-alpha-D-glucosyl](n+1) + ADP + H(+). It participates in glycan biosynthesis; starch biosynthesis. May be involved in starch synthesis in endosperm amyloplasts and contribute to the deposition of transient starch in chloroplasts of leaves. The sequence is that of Soluble starch synthase 2-1, chloroplastic/amyloplastic (SSII-1) from Oryza sativa subsp. japonica (Rice).